The sequence spans 395 residues: [LysW]-aminoadipate semialdehyde transaminase (395 aa).

Residues 113-114 (GT) and phenylalanine 140 contribute to the pyridoxal 5'-phosphate site. Arginine 143 contacts substrate. 225-228 (DEIQ) contributes to the pyridoxal 5'-phosphate binding site. Lysine 254 bears the N6-(pyridoxal phosphate)lysine mark. Threonine 282 is a binding site for substrate. Threonine 283 is a pyridoxal 5'-phosphate binding site.

Belongs to the class-III pyridoxal-phosphate-dependent aminotransferase family. LysJ subfamily. Homodimer. The cofactor is pyridoxal 5'-phosphate.

The protein localises to the cytoplasm. It catalyses the reaction [amino-group carrier protein]-C-terminal-gamma-(L-lysyl)-L-glutamate + 2-oxoglutarate = [amino-group carrier protein]-C-terminal-N-(1-carboxy-5-oxopentan-1-yl)-L-glutamine + L-glutamate. It participates in amino-acid biosynthesis; L-lysine biosynthesis via AAA pathway; L-lysine from L-alpha-aminoadipate (Thermus route): step 4/5. In terms of biological role, catalyzes the transfer of the amino group of L-glutamate to [LysW]-aminoadipate 6-semialdehyde, generating [LysW]-gamma-L-lysine. The protein is [LysW]-aminoadipate semialdehyde transaminase of Thermus thermophilus (strain ATCC 27634 / DSM 579 / HB8).